The primary structure comprises 157 residues: 6,7-dimethyl-8-ribityllumazine synthase (157 aa).

Residues phenylalanine 23, 57 to 59, and 81 to 83 each bind 5-amino-6-(D-ribitylamino)uracil; these read AFE and AVI. Residue 86–87 coordinates (2S)-2-hydroxy-3-oxobutyl phosphate; the sequence is ST. Histidine 89 acts as the Proton donor in catalysis. Position 114 (phenylalanine 114) interacts with 5-amino-6-(D-ribitylamino)uracil. Arginine 128 serves as a coordination point for (2S)-2-hydroxy-3-oxobutyl phosphate.

The protein belongs to the DMRL synthase family.

The enzyme catalyses (2S)-2-hydroxy-3-oxobutyl phosphate + 5-amino-6-(D-ribitylamino)uracil = 6,7-dimethyl-8-(1-D-ribityl)lumazine + phosphate + 2 H2O + H(+). It participates in cofactor biosynthesis; riboflavin biosynthesis; riboflavin from 2-hydroxy-3-oxobutyl phosphate and 5-amino-6-(D-ribitylamino)uracil: step 1/2. In terms of biological role, catalyzes the formation of 6,7-dimethyl-8-ribityllumazine by condensation of 5-amino-6-(D-ribitylamino)uracil with 3,4-dihydroxy-2-butanone 4-phosphate. This is the penultimate step in the biosynthesis of riboflavin. This chain is 6,7-dimethyl-8-ribityllumazine synthase, found in Desulfosudis oleivorans (strain DSM 6200 / JCM 39069 / Hxd3) (Desulfococcus oleovorans).